A 286-amino-acid chain; its full sequence is Ribosome maturation factor RimP (286 aa).

Over residues 200 to 224 (LDGEDGDDTGVDAGDPDQDDADDAL) the composition is skewed to acidic residues. The tract at residues 200–286 (LDGEDGDDTG…ANASTVKETH (87 aa)) is disordered. Residues 248–267 (VGRKAKGKKASPKKSNAKKK) are compositionally biased toward basic residues. Residues 273–286 (AASSANASTVKETH) show a composition bias toward polar residues.

This sequence belongs to the RimP family.

The protein localises to the cytoplasm. Functionally, required for maturation of 30S ribosomal subunits. This chain is Ribosome maturation factor RimP, found in Xanthobacter autotrophicus (strain ATCC BAA-1158 / Py2).